Consider the following 111-residue polypeptide: Protein BEX5 (111 aa).

Basic and acidic residues predominate over residues 1–12; sequence MENVPKENKVVE. Residues 1-37 form a disordered region; it reads MENVPKENKVVEKAPVQNEAPALGGGEYQEPGGNVKG. The interval 100-104 is his cluster; that stretch reads HHDHH. Position 108 (cysteine 108) interacts with Zn(2+).

The protein belongs to the BEX family. Ubiquitinated. Degraded by the proteasome.

Its subcellular location is the cytoplasm. The sequence is that of Protein BEX5 (BEX5) from Homo sapiens (Human).